We begin with the raw amino-acid sequence, 184 residues long: Ribonuclease HII (184 aa).

The 183-residue stretch at 2–184 (AKICGIDEAG…KPKLAQSSLF (183 aa)) folds into the RNase H type-2 domain. Residues Asp-8, Glu-9, and Asp-95 each coordinate a divalent metal cation.

This sequence belongs to the RNase HII family. Mn(2+) is required as a cofactor. Requires Mg(2+) as cofactor.

Its subcellular location is the cytoplasm. The enzyme catalyses Endonucleolytic cleavage to 5'-phosphomonoester.. Functionally, endonuclease that specifically degrades the RNA of RNA-DNA hybrids. This Campylobacter concisus (strain 13826) protein is Ribonuclease HII.